The primary structure comprises 273 residues: Shikimate dehydrogenase (NADP(+)) (273 aa).

Residues S14–S16 and T61 contribute to the shikimate site. K65 (proton acceptor) is an active-site residue. Positions 86 and 102 each coordinate shikimate. Residues G126 to A130, N150 to R155, and M213 each bind NADP(+). Residue Y215 coordinates shikimate. Position 237 (G237) interacts with NADP(+).

It belongs to the shikimate dehydrogenase family. Homodimer.

The enzyme catalyses shikimate + NADP(+) = 3-dehydroshikimate + NADPH + H(+). The protein operates within metabolic intermediate biosynthesis; chorismate biosynthesis; chorismate from D-erythrose 4-phosphate and phosphoenolpyruvate: step 4/7. In terms of biological role, involved in the biosynthesis of the chorismate, which leads to the biosynthesis of aromatic amino acids. Catalyzes the reversible NADPH linked reduction of 3-dehydroshikimate (DHSA) to yield shikimate (SA). The protein is Shikimate dehydrogenase (NADP(+)) of Aeromonas hydrophila subsp. hydrophila (strain ATCC 7966 / DSM 30187 / BCRC 13018 / CCUG 14551 / JCM 1027 / KCTC 2358 / NCIMB 9240 / NCTC 8049).